The following is a 51-amino-acid chain: Sperm protamine P1 (51 aa).

It belongs to the protamine P1 family. In terms of tissue distribution, testis.

Its subcellular location is the nucleus. The protein resides in the chromosome. Protamines substitute for histones in the chromatin of sperm during the haploid phase of spermatogenesis. They compact sperm DNA into a highly condensed, stable and inactive complex. This is Sperm protamine P1 (PRM1) from Trachypithecus johnii (Nilgiri langur).